The chain runs to 433 residues: Zinc carboxypeptidase A 1 (433 aa).

A signal peptide spans 1–28; the sequence is MVRLNSAAGSRWWAPAMAILAVALSVEA. Residues 130–423 enclose the Peptidase M14 domain; the sequence is DYHTLEEIHA…DSLITLLEES (294 aa). His187 and Glu190 together coordinate Zn(2+). A disulfide bond links Cys253 and Cys276. Residue His312 participates in Zn(2+) binding. Glu387 functions as the Proton donor/acceptor in the catalytic mechanism.

Belongs to the peptidase M14 family. Zn(2+) is required as a cofactor. As to expression, expressed in the posterior midgut in pupae and female adults.

Its subcellular location is the secreted. Its function is as follows. Involved in the digestion of the blood meal. This chain is Zinc carboxypeptidase A 1, found in Anopheles gambiae (African malaria mosquito).